The chain runs to 222 residues: Pro-opiomelanocortin-1 (222 aa).

The signal sequence occupies residues 1–28 (MVRGERMLCPAWLLALAVLCAAGSEVRA). Residues 29-105 (QCMEDARCRD…DPESSPQHEH (77 aa)) constitute a propeptide that is removed on maturation.

It belongs to the POMC family. In terms of processing, specific enzymatic cleavages at paired basic residues yield the different active peptides.

The protein localises to the secreted. Its function is as follows. Stimulates the adrenal glands to release cortisol. Functionally, anorexigenic peptide. Increases the pigmentation of skin by increasing melanin production in melanocytes. In terms of biological role, increases the pigmentation of skin by increasing melanin production in melanocytes. Endogenous orexigenic opiate. Its function is as follows. Endogenous opiate. The sequence is that of Pro-opiomelanocortin-1 (pomca) from Cyprinus carpio (Common carp).